We begin with the raw amino-acid sequence, 217 residues long: Urease accessory protein UreG (217 aa).

Residue 13 to 20 (GPVGSGKT) coordinates GTP.

This sequence belongs to the SIMIBI class G3E GTPase family. UreG subfamily. In terms of assembly, homodimer. UreD, UreF and UreG form a complex that acts as a GTP-hydrolysis-dependent molecular chaperone, activating the urease apoprotein by helping to assemble the nickel containing metallocenter of UreC. The UreE protein probably delivers the nickel.

The protein resides in the cytoplasm. Its function is as follows. Facilitates the functional incorporation of the urease nickel metallocenter. This process requires GTP hydrolysis, probably effectuated by UreG. The sequence is that of Urease accessory protein UreG from Frankia alni (strain DSM 45986 / CECT 9034 / ACN14a).